Here is a 235-residue protein sequence, read N- to C-terminus: Mediator of RNA polymerase II transcription subunit 29 (235 aa).

The span at 1–14 (MMNQMGMMMQQQGV) shows a compositional bias: low complexity. The tract at residues 1 to 54 (MMNQMGMMMQQQGVGVPGGPGGVGGVGMPGPGGVGVAPGMMQSPQMQQAQQQQV) is disordered. Over residues 15 to 36 (GVPGGPGGVGGVGMPGPGGVGV) the composition is skewed to gly residues. A compositionally biased stretch (low complexity) spans 37–54 (APGMMQSPQMQQAQQQQV).

Belongs to the Mediator complex subunit 29 family. In terms of assembly, component of the Mediator complex.

The protein localises to the nucleus. Functionally, component of the Mediator complex, a coactivator involved in the regulated transcription of nearly all RNA polymerase II-dependent genes. Mediator functions as a bridge to convey information from gene-specific regulatory proteins to the basal RNA polymerase II transcription machinery. Mediator is recruited to promoters by direct interactions with regulatory proteins and serves as a scaffold for the assembly of a functional preinitiation complex with RNA polymerase II and the general transcription factors. This is Mediator of RNA polymerase II transcription subunit 29 (ix) from Anopheles gambiae (African malaria mosquito).